The following is a 158-amino-acid chain: NAD(P)H-quinone oxidoreductase subunit J, chloroplastic (158 aa).

This sequence belongs to the complex I 30 kDa subunit family. NDH is composed of at least 16 different subunits, 5 of which are encoded in the nucleus.

It localises to the plastid. Its subcellular location is the chloroplast thylakoid membrane. It catalyses the reaction a plastoquinone + NADH + (n+1) H(+)(in) = a plastoquinol + NAD(+) + n H(+)(out). The catalysed reaction is a plastoquinone + NADPH + (n+1) H(+)(in) = a plastoquinol + NADP(+) + n H(+)(out). NDH shuttles electrons from NAD(P)H:plastoquinone, via FMN and iron-sulfur (Fe-S) centers, to quinones in the photosynthetic chain and possibly in a chloroplast respiratory chain. The immediate electron acceptor for the enzyme in this species is believed to be plastoquinone. Couples the redox reaction to proton translocation, and thus conserves the redox energy in a proton gradient. This chain is NAD(P)H-quinone oxidoreductase subunit J, chloroplastic, found in Vitis vinifera (Grape).